The following is a 113-amino-acid chain: Putative single-stranded DNA-binding protein ycf41 (113 aa).

Residues 1 to 101 (MNYASFIIKI…EVSGFKIYPF (101 aa)) form the SSB domain.

The protein localises to the plastid. It is found in the chloroplast. The chain is Putative single-stranded DNA-binding protein ycf41 (ycf41) from Trieres chinensis (Marine centric diatom).